We begin with the raw amino-acid sequence, 180 residues long: NADH-quinone oxidoreductase subunit I (180 aa).

2 consecutive 4Fe-4S ferredoxin-type domains span residues L50 to A80 and E90 to D119. The [4Fe-4S] cluster site is built by C60, C63, C66, C70, C99, C102, C105, and C109.

This sequence belongs to the complex I 23 kDa subunit family. NDH-1 is composed of 13 different subunits. Subunits NuoA, H, J, K, L, M, N constitute the membrane sector of the complex. [4Fe-4S] cluster is required as a cofactor.

It is found in the cell inner membrane. The catalysed reaction is a quinone + NADH + 5 H(+)(in) = a quinol + NAD(+) + 4 H(+)(out). NDH-1 shuttles electrons from NADH, via FMN and iron-sulfur (Fe-S) centers, to quinones in the respiratory chain. The immediate electron acceptor for the enzyme in this species is believed to be ubiquinone. Couples the redox reaction to proton translocation (for every two electrons transferred, four hydrogen ions are translocated across the cytoplasmic membrane), and thus conserves the redox energy in a proton gradient. The polypeptide is NADH-quinone oxidoreductase subunit I (Yersinia enterocolitica serotype O:8 / biotype 1B (strain NCTC 13174 / 8081)).